Reading from the N-terminus, the 133-residue chain is Glutaredoxin-C4, chloroplastic (133 aa).

The span at Met1–Pro13 shows a compositional bias: low complexity. Residues Met1 to Pro25 are disordered. The N-terminal 27 residues, Met1–Met27, are a transit peptide targeting the chloroplast. The Glutaredoxin domain maps to Leu29–Ala129. A disulfide bridge links Cys49 with Cys52.

Belongs to the glutaredoxin family. CPYC subfamily.

The protein localises to the plastid. Its subcellular location is the chloroplast. Functionally, has a glutathione-disulfide oxidoreductase activity in the presence of NADPH and glutathione reductase. Reduces low molecular weight disulfides and proteins. The sequence is that of Glutaredoxin-C4, chloroplastic (GRXC4) from Oryza sativa subsp. japonica (Rice).